A 157-amino-acid chain; its full sequence is Transcription elongation factor GreA (157 aa).

A coiled-coil region spans residues 47–75 (SGEYEDAKKAQALLEGRIRELKHLLSRAE).

This sequence belongs to the GreA/GreB family.

Necessary for efficient RNA polymerase transcription elongation past template-encoded arresting sites. The arresting sites in DNA have the property of trapping a certain fraction of elongating RNA polymerases that pass through, resulting in locked ternary complexes. Cleavage of the nascent transcript by cleavage factors such as GreA or GreB allows the resumption of elongation from the new 3'terminus. GreA releases sequences of 2 to 3 nucleotides. This is Transcription elongation factor GreA from Chloroflexus aurantiacus (strain ATCC 29366 / DSM 635 / J-10-fl).